Consider the following 306-residue polypeptide: Putative syntaxin-3 (306 aa).

At 1–279 the chain is on the cytoplasmic side; sequence MPRDRLKELQ…QKRARKMKVC (279 aa). A required for the regulation of the defecation motor program region spans residues 40 to 180; the sequence is QDADFEMFLE…QLSDEEIENA (141 aa). The region spanning 204–266 is the t-SNARE coiled-coil homology domain; it reads YDEVKSRADE…KQARGNVEEA (63 aa). The chain crosses the membrane as a helical; Anchor for type IV membrane protein span at residues 280 to 300; sequence IIIGSIIAVLILILFIQSAVC. The Extracellular segment spans residues 301–306; sequence HFTPIC.

This sequence belongs to the syntaxin family. As to expression, expressed in body wall, pharyngeal, vulval and enteric muscles and in some head neurons.

It is found in the cell membrane. Its function is as follows. Potentially involved in docking of synaptic vesicles at presynaptic active zones. Acts in the intestine to regulate anterior body muscle contractions (aBOC) and the expulsion steps during the defecation motor program (DMP). This is Putative syntaxin-3 from Caenorhabditis elegans.